The primary structure comprises 93 residues: UPF0147 protein MM_1385 (93 aa).

The protein belongs to the UPF0147 family.

This is UPF0147 protein MM_1385 from Methanosarcina mazei (strain ATCC BAA-159 / DSM 3647 / Goe1 / Go1 / JCM 11833 / OCM 88) (Methanosarcina frisia).